The chain runs to 476 residues: Chromosomal replication initiator protein DnaA (476 aa).

The interval 1 to 73 is domain I, interacts with DnaA modulators; sequence MTNSEQERWS…LSAWQAEMPE (73 aa). The domain II stretch occupies residues 73 to 132; sequence EVHRIDLSVRTAMRCATPAKEAPAAVEARRPERSDAKPVSDARAPVMTPVAASHDALGGS. Positions 92 to 115 are disordered; that stretch reads KEAPAAVEARRPERSDAKPVSDAR. Residues 99-112 show a composition bias toward basic and acidic residues; that stretch reads EARRPERSDAKPVS. The segment at 133-355 is domain III, AAA+ region; sequence PLDPRLTFAS…GAINRLLAHS (223 aa). Residues Gly180, Gly182, Lys183, and Thr184 each coordinate ATP. Residues 356–476 are domain IV, binds dsDNA; it reads KLNNQPVTLD…VESLKRQLQD (121 aa).

It belongs to the DnaA family. In terms of assembly, oligomerizes as a right-handed, spiral filament on DNA at oriC.

It is found in the cytoplasm. In terms of biological role, plays an essential role in the initiation and regulation of chromosomal replication. ATP-DnaA binds to the origin of replication (oriC) to initiate formation of the DNA replication initiation complex once per cell cycle. Binds the DnaA box (a 9 base pair repeat at the origin) and separates the double-stranded (ds)DNA. Forms a right-handed helical filament on oriC DNA; dsDNA binds to the exterior of the filament while single-stranded (ss)DNA is stabiized in the filament's interior. The ATP-DnaA-oriC complex binds and stabilizes one strand of the AT-rich DNA unwinding element (DUE), permitting loading of DNA polymerase. After initiation quickly degrades to an ADP-DnaA complex that is not apt for DNA replication. Binds acidic phospholipids. The sequence is that of Chromosomal replication initiator protein DnaA from Bradyrhizobium sp. (strain ORS 278).